The chain runs to 146 residues: MAARPMLVVALLCAAAAAATAQQATNVRATYHYYRPAQNNWDLGAPAVSAYCATWDASKPLSWRSKYGWTAFCGPAGAHGQASCGKCLQVTNPATGAQITARIVDQCANGGLDLDWDTVFTKIDTNGIGYQQGHLNVNYQFVDCRD.

The first 21 residues, 1–21 (MAARPMLVVALLCAAAAAATA), serve as a signal peptide directing secretion. Position 22 is a pyrrolidone carboxylic acid (glutamine 22). One can recognise a Barwin domain in the interval 22–146 (QQATNVRATY…VNYQFVDCRD (125 aa)). Disulfide bonds link cysteine 52-cysteine 84, cysteine 73-cysteine 107, and cysteine 87-cysteine 144.

As to quaternary structure, monomer.

With respect to regulation, inhibited by 5'-ADP. Its function is as follows. Shows antifungal activity towards B.cinerea and towards the wheat-specific pathogenic fungi F.culmorum and F.graminearum (groups 1 and 2). Has ribonuclease activity. In Triticum aestivum (Wheat), this protein is Wheatwin-1 (PR4A).